The following is a 1410-amino-acid chain: non-specific serine/threonine protein kinase (1410 aa).

Residues 27-299 (THYVSQLNNS…LLEKYRTIYF (273 aa)) form the Protein kinase domain. Residues 33–41 (LNNSRFLKT) and Lys-54 each bind ATP. The active-site Proton acceptor is the Asp-147. HEAT repeat units lie at residues 441-478 (TKLDRTLPYLVAALEDDSTRVKVMAMNCVTTLIKEVKH), 485-525 (NIFV…KANL), 556-594 (RKLQQLFEDLTVSILTDPEISVKVALLKNILPLCKYFGR), 596-633 (KTNDVILSHLITYLNDRDPALRMYLVECISGIAILLGP), and 635-672 (TMEQYILPLIIQTITDEEELVVVSVLKNLKDLLKTRFV). WD repeat units follow at residues 1037–1076 (FDGTLLQSEVLLGTKSFMIYGSDQGALTVWDIDRLANEKS), 1187–1226 (ADYGCTISMVLDDKNNLLFFGTVSGIIEMWDARYFVQIRA), and 1230–1273 (GESL…CKHV).

This sequence belongs to the protein kinase superfamily. Ser/Thr protein kinase family. Component of the autophagy-specific VPS34 PI3-kinase complex I composed of VPS15, VPS30, VPS34, ATG14 and ATG38; and of the VPS34 PI3-kinase complex II composed of VPS15, VPS30, VPS34 and VPS38. Autophosphorylated.

Its subcellular location is the golgi apparatus. The protein resides in the trans-Golgi network membrane. It localises to the endosome membrane. It catalyses the reaction L-seryl-[protein] + ATP = O-phospho-L-seryl-[protein] + ADP + H(+). The enzyme catalyses L-threonyl-[protein] + ATP = O-phospho-L-threonyl-[protein] + ADP + H(+). Its function is as follows. Serine/threonine-protein kinase that plays a role in signaling in modulation of host immune response, intracellular survival and virulence. Required for impediment of phagosomal maturation in THP-1 macrophages. Regulatory subunit of the autophagy-specific VPS34 PI3-kinase complex I essential to recruit the ATG8-phosphatidylinositol conjugate and the ATG12-ATG5 conjugate to the pre-autophagosomal structure. Within the PS34 PI3-kinase complex I, VPS15-mediated phosphorylation of VPS34 may be required for recruiting VPS34 to the membrane but not for activation of its PI3K activity. Is also involved in endosome-to-Golgi retrograde transport as part of the VPS34 PI3-kinase complex II. This second complex is required for the endosome-to-Golgi retrieval of PEP1 and KEX2, and the recruitment of VPS5 and VPS7, two components of the retromer complex, to endosomal membranes (probably through the synthesis of a specific pool of phosphatidylinositol 3-phosphate recruiting the retromer to the endosomes). By regulating VPS34 kinase activity, VPS15 appears to be essential for the efficient delivery of soluble hydrolases to the yeast vacuole. In Candida glabrata (strain ATCC 2001 / BCRC 20586 / JCM 3761 / NBRC 0622 / NRRL Y-65 / CBS 138) (Yeast), this protein is non-specific serine/threonine protein kinase.